A 199-amino-acid chain; its full sequence is dCTP deaminase (199 aa).

DCTP contacts are provided by residues 110–115 (RSSLAR), Asp-128, 136–138 (VLE), Tyr-171, and Gln-182. The active-site Proton donor/acceptor is Glu-138.

It belongs to the dCTP deaminase family. As to quaternary structure, homotrimer.

It carries out the reaction dCTP + H2O + H(+) = dUTP + NH4(+). It functions in the pathway pyrimidine metabolism; dUMP biosynthesis; dUMP from dCTP (dUTP route): step 1/2. Catalyzes the deamination of dCTP to dUTP. This chain is dCTP deaminase, found in Pseudoalteromonas atlantica (strain T6c / ATCC BAA-1087).